The sequence spans 375 residues: Queuine tRNA-ribosyltransferase (375 aa).

Aspartate 90 acts as the Proton acceptor in catalysis. Residues 90-94, aspartate 144, glutamine 193, and glycine 220 contribute to the substrate site; that span reads DSGGF. Residues 251–257 form an RNA binding region; that stretch reads GVGTPED. The active-site Nucleophile is the aspartate 270. The tract at residues 275 to 279 is RNA binding; important for wobble base 34 recognition; that stretch reads TRNAR. Residues cysteine 308, cysteine 310, cysteine 313, and histidine 339 each coordinate Zn(2+).

This sequence belongs to the queuine tRNA-ribosyltransferase family. As to quaternary structure, homodimer. Within each dimer, one monomer is responsible for RNA recognition and catalysis, while the other monomer binds to the replacement base PreQ1. Zn(2+) serves as cofactor.

The catalysed reaction is 7-aminomethyl-7-carbaguanine + guanosine(34) in tRNA = 7-aminomethyl-7-carbaguanosine(34) in tRNA + guanine. Its pathway is tRNA modification; tRNA-queuosine biosynthesis. Catalyzes the base-exchange of a guanine (G) residue with the queuine precursor 7-aminomethyl-7-deazaguanine (PreQ1) at position 34 (anticodon wobble position) in tRNAs with GU(N) anticodons (tRNA-Asp, -Asn, -His and -Tyr). Catalysis occurs through a double-displacement mechanism. The nucleophile active site attacks the C1' of nucleotide 34 to detach the guanine base from the RNA, forming a covalent enzyme-RNA intermediate. The proton acceptor active site deprotonates the incoming PreQ1, allowing a nucleophilic attack on the C1' of the ribose to form the product. After dissociation, two additional enzymatic reactions on the tRNA convert PreQ1 to queuine (Q), resulting in the hypermodified nucleoside queuosine (7-(((4,5-cis-dihydroxy-2-cyclopenten-1-yl)amino)methyl)-7-deazaguanosine). The sequence is that of Queuine tRNA-ribosyltransferase from Methylibium petroleiphilum (strain ATCC BAA-1232 / LMG 22953 / PM1).